We begin with the raw amino-acid sequence, 199 residues long: RNA-binding protein, mRNA-processing factor 2a (199 aa).

Residues 20-97 (RTLFVSGLPV…QTLRLEFAKA (78 aa)) form the RRM domain.

In terms of assembly, interacts with Bucky ball (BUC); to mediate Balbiani body formation and oocyte polarity during early oogenesis.

Its subcellular location is the cytoplasm. It localises to the nucleus. It is found in the stress granule. RNA-binding protein involved in the regulation of smooth muscle cell differentiation and proliferation in the gastrointestinal system. RNA-binding protein localized in Balbiani body (electron-dense aggregates in the oocyte) and germ plasm during oogenesis, and may be required to maintain germ plasm mRNA translational repression. Translational regulator during topographic map formation in the visual system. Establishes oocyte polarity through interaction with Bucky ball (BUC). Acts as a pre-mRNA alternative splicing regulator. Mediates ACTN1 and FLNB alternative splicing. Likely binds to mRNA tandem CAC trinucleotide or CA dinucleotide motifs. In Danio rerio (Zebrafish), this protein is RNA-binding protein, mRNA-processing factor 2a.